Here is a 99-residue protein sequence, read N- to C-terminus: RNA-binding protein HI_1333 (99 aa).

In terms of domain architecture, CRM spans 2–98 (TTLSTKQKQF…SEEAKIQLPR (97 aa)).

The chain is RNA-binding protein HI_1333 from Haemophilus influenzae (strain ATCC 51907 / DSM 11121 / KW20 / Rd).